A 316-amino-acid chain; its full sequence is Rhomboid-related protein 4 (316 aa).

Residues 1–21 (MQRRTRGIDTGLLLLLSQVFH) lie on the Cytoplasmic side of the membrane. Residues 22–42 (IGINNIPPVTLATLAVNVWFF) traverse the membrane as a helical segment. The Extracellular portion of the chain corresponds to 43–103 (LNPWKPLYHS…KLEKRLGSRW (61 aa)). Residues 104-124 (FAYIIATFSLLTGVVYLLLQF) form a helical membrane-spanning segment. Topologically, residues 125 to 137 (ASAELMNQPDFKR) are cytoplasmic. A helical transmembrane segment spans residues 138 to 154 (NCAVGFSGVLFALKVLS). Ser144 serves as the catalytic Nucleophile. The Extracellular portion of the chain corresponds to 155–182 (NHYCPGGFVNILGFPVPNRFACWAELAA). Residues 183–203 (IHFCTPGTSFAGHLAGILVGL) traverse the membrane as a helical segment. His195 is an active-site residue. Residues 204–316 (MYTQGPLKKI…RQRLHRFDGQ (113 aa)) lie on the Cytoplasmic side of the membrane. The ubiquitin-binding domain (UBD) stretch occupies residues 269 to 284 (SEEEQLERALRASIWD). Residues 301-316 (PEEEMRRQRLHRFDGQ) form a VCP/p97-interacting motif (VIM) region.

It belongs to the peptidase S54 family. In terms of assembly, interacts with BIK and STEAP3. Interacts (via C-terminal domain) with VCP. Interacts with ubiquitin and ubiquitinated proteins. Expressed in intestine, lung, brain, kidney, epididymis and testis.

Its subcellular location is the endoplasmic reticulum membrane. The protein localises to the mitochondrion membrane. It catalyses the reaction Cleaves type-1 transmembrane domains using a catalytic dyad composed of serine and histidine that are contributed by different transmembrane domains.. With respect to regulation, inhibited by aprotinin. Functionally, intramembrane-cleaving serine protease that cleaves single transmembrane or multi-pass membrane proteins in the hydrophobic plane of the membrane, luminal loops and juxtamembrane regions. Involved in regulated intramembrane proteolysis and the subsequent release of functional polypeptides from their membrane anchors. Functional component of endoplasmic reticulum-associated degradation (ERAD) for misfolded membrane proteins. Required for the degradation process of some specific misfolded endoplasmic reticulum (ER) luminal proteins. Participates in the transfer of misfolded proteins from the ER to the cytosol, where they are destroyed by the proteasome in a ubiquitin-dependent manner. Functions in BIK, MPZ, PKD1, PTCRA, RHO, STEAP3 and TRAC processing. Involved in the regulation of exosomal secretion; inhibits the TSAP6-mediated secretion pathway. Involved in the regulation of apoptosis; modulates BIK-mediated apoptotic activity. Also plays a role in the regulation of spermatogenesis; inhibits apoptotic activity in spermatogonia. The chain is Rhomboid-related protein 4 (Rhbdd1) from Rattus norvegicus (Rat).